Here is a 224-residue protein sequence, read N- to C-terminus: UPF0758 protein Noc_0236 (224 aa).

The region spanning Val102 to Leu224 is the MPN domain. Residues His173, His175, and Asp186 each contribute to the Zn(2+) site. The JAMM motif motif lies at His173–Asp186.

The protein belongs to the UPF0758 family.

The protein is UPF0758 protein Noc_0236 of Nitrosococcus oceani (strain ATCC 19707 / BCRC 17464 / JCM 30415 / NCIMB 11848 / C-107).